The primary structure comprises 407 residues: Na(+)-translocating NADH-quinone reductase subunit F (407 aa).

The chain crosses the membrane as a helical span at residues 6-26; sequence IFLAIGMFTAIVLGLVAIILV. Residues 35–127 form the 2Fe-2S ferredoxin-type domain; the sequence is GDVTIQINGE…DMQIRVPEEV (93 aa). [2Fe-2S] cluster is bound by residues C70, C76, C79, and C111. In terms of domain architecture, FAD-binding FR-type spans 130-269; the sequence is VKKWECTVES…YGPFGEFFAK (140 aa).

The protein belongs to the NqrF family. In terms of assembly, composed of six subunits; NqrA, NqrB, NqrC, NqrD, NqrE and NqrF. The cofactor is [2Fe-2S] cluster. FAD is required as a cofactor.

The protein localises to the cell inner membrane. The catalysed reaction is a ubiquinone + n Na(+)(in) + NADH + H(+) = a ubiquinol + n Na(+)(out) + NAD(+). NQR complex catalyzes the reduction of ubiquinone-1 to ubiquinol by two successive reactions, coupled with the transport of Na(+) ions from the cytoplasm to the periplasm. The first step is catalyzed by NqrF, which accepts electrons from NADH and reduces ubiquinone-1 to ubisemiquinone by a one-electron transfer pathway. The protein is Na(+)-translocating NADH-quinone reductase subunit F of Pseudomonas paraeruginosa (strain DSM 24068 / PA7) (Pseudomonas aeruginosa (strain PA7)).